Reading from the N-terminus, the 233-residue chain is Putative glutathione peroxidase 7, chloroplastic (233 aa).

The N-terminal 69 residues, M1 to R69, are a transit peptide targeting the chloroplast. Residue C108 is part of the active site.

Belongs to the glutathione peroxidase family.

Its subcellular location is the plastid. It localises to the chloroplast. The enzyme catalyses 2 glutathione + H2O2 = glutathione disulfide + 2 H2O. Functionally, may constitute a glutathione peroxidase-like protective system against oxidative stresses. The chain is Putative glutathione peroxidase 7, chloroplastic (GPX7) from Arabidopsis thaliana (Mouse-ear cress).